We begin with the raw amino-acid sequence, 383 residues long: Forkhead box protein I3-B (383 aa).

Residues 1–12 show a composition bias toward polar residues; the sequence is MTSYESQGQSPT. 3 disordered regions span residues 1–55, 215–277, and 317–348; these read MTSY…YELG, DNGN…PCLS, and TTGFSTFTPSTTVSDWASPLPPPPPMSSSPSH. Residues 25 to 35 show a composition bias toward low complexity; that stretch reads PPELSLYSDSY. The fork-head DNA-binding region spans 130-224; that stretch reads RPPYSYSALI…DNGNFRRKRK (95 aa). The short motif at 220-226 is the Nuclear localization signal element; sequence RRKRKRK. Positions 234–249 are enriched in low complexity; it reads SSSGGNESGDSNGRGS. The segment covering 250–277 has biased composition (polar residues); sequence PKSQSIDISTSPEKGPSPASTGPSPCLS. The segment covering 317–330 has biased composition (low complexity); that stretch reads TTGFSTFTPSTTVS.

As to expression, expressed in ionocyte precursors.

It localises to the nucleus. Transcription factor required for epithelial cell differentiation. Involved in specification of skin ionocytes from epidermal precursors. This Danio rerio (Zebrafish) protein is Forkhead box protein I3-B.